The primary structure comprises 497 residues: MTALFPFDNSYARLPSHFFGRVAPTAVEAPRLIRLNRALAVDLGLDPDRLESPEGVEVLAGQRVPEGAEPLAAAYAGHQFGQFVPQLGDGRAILLGEVVGRDGRRDIQLKGSGPTPFSRRGDGRAALGPVLREYLVSEAMHALGIPTTRALAAVTTGEQVIRETALPGAVLTRVASSHIRVGSFQFFAARGDVEGLRALADHAIARHDPEAARADNPYRALLDGVIRRQAALVARWLTVGFIHGVMNTDNMSIAGETIDYGPCAFLDTYDPATAFSSIDRHGRYAYGNQPRIALWNLTRLAEALLPLLSEDETQAVAEAEAALTGFAGQFEAAYHGGLNCKLGLATTRDGDPALAGDLLKTMAENEADFTLTFRRLGEAVPGPDGEPDPAAVEAVRSLFIDPTAYDRWAGGWRRRLKDEAGDAAARRQMMRAANPAFIPRNHRVEEMITAAVERQDFAPFETLLTVLARPYDDQPDFAQYAEPPEGGGRGYRTFCGT.

ATP is bound by residues glycine 88, glycine 90, arginine 91, lysine 110, aspartate 122, glycine 123, arginine 173, and arginine 180. Aspartate 249 (proton acceptor) is an active-site residue. Mg(2+)-binding residues include asparagine 250 and aspartate 259. Aspartate 259 is an ATP binding site.

Belongs to the SELO family. Mg(2+) is required as a cofactor. Mn(2+) serves as cofactor.

The catalysed reaction is L-seryl-[protein] + ATP = 3-O-(5'-adenylyl)-L-seryl-[protein] + diphosphate. The enzyme catalyses L-threonyl-[protein] + ATP = 3-O-(5'-adenylyl)-L-threonyl-[protein] + diphosphate. It carries out the reaction L-tyrosyl-[protein] + ATP = O-(5'-adenylyl)-L-tyrosyl-[protein] + diphosphate. It catalyses the reaction L-histidyl-[protein] + UTP = N(tele)-(5'-uridylyl)-L-histidyl-[protein] + diphosphate. The catalysed reaction is L-seryl-[protein] + UTP = O-(5'-uridylyl)-L-seryl-[protein] + diphosphate. The enzyme catalyses L-tyrosyl-[protein] + UTP = O-(5'-uridylyl)-L-tyrosyl-[protein] + diphosphate. Nucleotidyltransferase involved in the post-translational modification of proteins. It can catalyze the addition of adenosine monophosphate (AMP) or uridine monophosphate (UMP) to a protein, resulting in modifications known as AMPylation and UMPylation. In Methylorubrum extorquens (strain CM4 / NCIMB 13688) (Methylobacterium extorquens), this protein is Protein nucleotidyltransferase YdiU.